Consider the following 160-residue polypeptide: UPF0225 protein CGSHiGG_04185 (160 aa).

It belongs to the UPF0225 family.

The protein is UPF0225 protein CGSHiGG_04185 of Haemophilus influenzae (strain PittGG).